The sequence spans 752 residues: ATP-dependent RNA helicase DRS1 (752 aa).

2 disordered regions span residues 1–61 (MVVG…NLDE) and 119–223 (GLVK…TEGD). Residues 19-34 (DSEDDVPILDSSDDEK) show a composition bias toward acidic residues. Basic residues predominate over residues 40-51 (TTKKRKGKNNKK). Basic and acidic residues predominate over residues 124–142 (AHIDSKQEEETEKEKVEKE). Acidic residues-rich tracts occupy residues 167–191 (NQSE…QEEM) and 200–209 (DEIDEEDDSE). A Phosphoserine modification is found at S208. Positions 231–259 (ENFNSLSLSRPVLKGLASLGYVKPSPIQS) match the Q motif motif. One can recognise a Helicase ATP-binding domain in the interval 262 to 437 (IPIALLGKDI…SLSLKKPVRI (176 aa)). 275–282 (AVTGSGKT) is an ATP binding site. Positions 385 to 388 (DEAD) match the DEAD box motif. Positions 448–639 (KLTQEFVRIR…SMNDTIEDIL (192 aa)) constitute a Helicase C-terminal domain. A coiled-coil region spans residues 621 to 667 (IEETNKLVESMNDTIEDILVEEKEEKEILRAEMQLRKGENMLKHKKE). Residues 673 to 752 (RRTWFQSESD…NKKKGFKSRR (80 aa)) form a disordered region. The span at 694–705 (RNKKVTNSKKRK) shows a compositional bias: basic residues. Residues 722–734 (TKTDRIADQERTF) are compositionally biased toward basic and acidic residues. Positions 735–752 (KKQKSTNSNKKKGFKSRR) are enriched in basic residues.

It belongs to the DEAD box helicase family. DDX27/DRS1 subfamily. As to quaternary structure, interacts with RRP1 and associates with pre-ribosomal particles.

It localises to the nucleus. It is found in the nucleolus. It catalyses the reaction ATP + H2O = ADP + phosphate + H(+). Functionally, ATP-binding RNA helicase involved in ribosome assembly. The chain is ATP-dependent RNA helicase DRS1 (DRS1) from Saccharomyces cerevisiae (strain ATCC 204508 / S288c) (Baker's yeast).